A 393-amino-acid polypeptide reads, in one-letter code: Putative mitogen-activated protein kinase kinase kinase 7-like (393 aa).

Positions 11–266 (KLSEKFLGAG…PSMKEIEKFL (256 aa)) constitute a Protein kinase domain. ATP-binding positions include 17-25 (LGAGSGGAV) and K38. The active-site Proton acceptor is D133. The segment at 339–379 (AAADGDREVRRAEKDTERETSRAAHNGERETRRAGQDVGRE) is disordered.

The protein belongs to the protein kinase superfamily. STE Ser/Thr protein kinase family. MAP kinase kinase kinase subfamily. Mg(2+) is required as a cofactor.

It carries out the reaction L-seryl-[protein] + ATP = O-phospho-L-seryl-[protein] + ADP + H(+). The catalysed reaction is L-threonyl-[protein] + ATP = O-phospho-L-threonyl-[protein] + ADP + H(+). This chain is Putative mitogen-activated protein kinase kinase kinase 7-like (Takl1), found in Drosophila melanogaster (Fruit fly).